Consider the following 149-residue polypeptide: Transcriptional regulator MraZ (149 aa).

SpoVT-AbrB domains are found at residues 6-52 and 81-124; these read HAHR…TPPD and SEEV…DKRE.

This sequence belongs to the MraZ family. As to quaternary structure, forms oligomers.

It localises to the cytoplasm. It is found in the nucleoid. This Maridesulfovibrio salexigens (strain ATCC 14822 / DSM 2638 / NCIMB 8403 / VKM B-1763) (Desulfovibrio salexigens) protein is Transcriptional regulator MraZ.